A 449-amino-acid chain; its full sequence is Adenosylhomocysteinase (449 aa).

Ser-2 is subject to N-acetylserine. Lys-21 participates in a covalent cross-link: Glycyl lysine isopeptide (Lys-Gly) (interchain with G-Cter in ubiquitin). 3 residues coordinate substrate: Thr-58, Asp-134, and Glu-159. 160 to 162 (TTT) lines the NAD(+) pocket. Residues Lys-189 and Asp-193 each coordinate substrate. NAD(+)-binding positions include Asn-194, 223–228 (GYGDVG), Glu-246, 302–304 (IGH), and Asn-349. Thr-393 carries the post-translational modification Phosphothreonine. Lys-413 is covalently cross-linked (Glycyl lysine isopeptide (Lys-Gly) (interchain with G-Cter in ubiquitin)).

It belongs to the adenosylhomocysteinase family. NAD(+) is required as a cofactor.

The catalysed reaction is S-adenosyl-L-homocysteine + H2O = L-homocysteine + adenosine. The protein operates within amino-acid biosynthesis; L-homocysteine biosynthesis; L-homocysteine from S-adenosyl-L-homocysteine: step 1/1. Functionally, adenosylhomocysteine is a competitive inhibitor of S-adenosyl-L-methionine-dependent methyl transferase reactions; therefore adenosylhomocysteinase may play a key role in the control of methylations via regulation of the intracellular concentration of adenosylhomocysteine. This is Adenosylhomocysteinase (SAH1) from Saccharomyces cerevisiae (strain ATCC 204508 / S288c) (Baker's yeast).